The following is a 97-amino-acid chain: MALIERIGKALEPLMLVMGLISPLATMPQLYKLYVSHSEHALGLSLTTWLLYSFIALLWTIYGIYHKNPTIWVGNCLGFLMYVAMVVGIIAHTGGTY.

Positions 4-70 (IERIGKALEP…IYGIYHKNPT (67 aa)) constitute a PQ-loop domain. The next 3 membrane-spanning stretches (helical) occupy residues 15–35 (MLVM…KLYV), 44–65 (LSLT…YGIY), and 71–91 (IWVG…GIIA).

Homodimer.

Its subcellular location is the cell membrane. In terms of biological role, the homodimer mediates transmembrane sugar transport down a concentration gradient. Transport is probably effected by rocking-type movements, where a cargo-binding cavity opens first on one and then on the other side of the membrane. The chain is Sugar transporter SemiSWEET from Vibrio sp. (strain N418).